Here is a 596-residue protein sequence, read N- to C-terminus: Cysteine--tRNA ligase (596 aa).

The interval 1-199 (MKSKTFLEKN…SQRYFEELRK (199 aa)) is unknown. Residue Cys212 participates in Zn(2+) binding. The short motif at 214–224 (PTVYDEVHIGN) is the 'HIGH' region element. Residues Cys377, His403, and Glu407 each coordinate Zn(2+). The 'KMSKS' region motif lies at 435–439 (KMSKS). Position 438 (Lys438) interacts with ATP.

The protein belongs to the class-I aminoacyl-tRNA synthetase family. As to quaternary structure, monomer. Zn(2+) serves as cofactor.

It localises to the cytoplasm. The catalysed reaction is tRNA(Cys) + L-cysteine + ATP = L-cysteinyl-tRNA(Cys) + AMP + diphosphate. The chain is Cysteine--tRNA ligase (cysS) from Mycoplasmopsis pulmonis (strain UAB CTIP) (Mycoplasma pulmonis).